The chain runs to 513 residues: 2-isopropylmalate synthase (513 aa).

One can recognise a Pyruvate carboxyltransferase domain in the interval 4 to 268 (IKIFDTTLRD…ETGIRTELIY (265 aa)). Residues Asp-13, His-203, His-205, and Asn-239 each contribute to the Mn(2+) site. Residues 392–513 (RLVHFHVHTG…GLLRKNGGVE (122 aa)) are regulatory domain.

The protein belongs to the alpha-IPM synthase/homocitrate synthase family. LeuA type 1 subfamily. As to quaternary structure, homodimer. Requires Mn(2+) as cofactor.

The protein localises to the cytoplasm. It carries out the reaction 3-methyl-2-oxobutanoate + acetyl-CoA + H2O = (2S)-2-isopropylmalate + CoA + H(+). It functions in the pathway amino-acid biosynthesis; L-leucine biosynthesis; L-leucine from 3-methyl-2-oxobutanoate: step 1/4. Catalyzes the condensation of the acetyl group of acetyl-CoA with 3-methyl-2-oxobutanoate (2-ketoisovalerate) to form 3-carboxy-3-hydroxy-4-methylpentanoate (2-isopropylmalate). The protein is 2-isopropylmalate synthase of Thermotoga neapolitana (strain ATCC 49049 / DSM 4359 / NBRC 107923 / NS-E).